The following is a 321-amino-acid chain: Acetyl-coenzyme A carboxylase carboxyl transferase subunit alpha (321 aa).

The 255-residue stretch at 39-293 (KLEEKSRKLT…KTELKRNLEE (255 aa)) folds into the CoA carboxyltransferase C-terminal domain.

The protein belongs to the AccA family. As to quaternary structure, acetyl-CoA carboxylase is a heterohexamer composed of biotin carboxyl carrier protein (AccB), biotin carboxylase (AccC) and two subunits each of ACCase subunit alpha (AccA) and ACCase subunit beta (AccD).

The protein resides in the cytoplasm. The catalysed reaction is N(6)-carboxybiotinyl-L-lysyl-[protein] + acetyl-CoA = N(6)-biotinyl-L-lysyl-[protein] + malonyl-CoA. It participates in lipid metabolism; malonyl-CoA biosynthesis; malonyl-CoA from acetyl-CoA: step 1/1. In terms of biological role, component of the acetyl coenzyme A carboxylase (ACC) complex. First, biotin carboxylase catalyzes the carboxylation of biotin on its carrier protein (BCCP) and then the CO(2) group is transferred by the carboxyltransferase to acetyl-CoA to form malonyl-CoA. The chain is Acetyl-coenzyme A carboxylase carboxyl transferase subunit alpha from Methylococcus capsulatus (strain ATCC 33009 / NCIMB 11132 / Bath).